The sequence spans 426 residues: Serine--tRNA ligase (426 aa).

233–235 (TAE) contributes to the L-serine binding site. 264–266 (RRE) contributes to the ATP binding site. Glu287 contacts L-serine. Residue 351 to 354 (EISS) coordinates ATP. Residue Ser386 participates in L-serine binding.

It belongs to the class-II aminoacyl-tRNA synthetase family. Type-1 seryl-tRNA synthetase subfamily. In terms of assembly, homodimer. The tRNA molecule binds across the dimer.

Its subcellular location is the cytoplasm. The enzyme catalyses tRNA(Ser) + L-serine + ATP = L-seryl-tRNA(Ser) + AMP + diphosphate + H(+). It catalyses the reaction tRNA(Sec) + L-serine + ATP = L-seryl-tRNA(Sec) + AMP + diphosphate + H(+). Its pathway is aminoacyl-tRNA biosynthesis; selenocysteinyl-tRNA(Sec) biosynthesis; L-seryl-tRNA(Sec) from L-serine and tRNA(Sec): step 1/1. In terms of biological role, catalyzes the attachment of serine to tRNA(Ser). Is also able to aminoacylate tRNA(Sec) with serine, to form the misacylated tRNA L-seryl-tRNA(Sec), which will be further converted into selenocysteinyl-tRNA(Sec). This is Serine--tRNA ligase from Prochlorococcus marinus (strain NATL1A).